The sequence spans 138 residues: Large ribosomal subunit protein uL16 (138 aa).

Residues 1-13 (MLQPKRRKYRKEQ) show a composition bias toward basic residues. The disordered stretch occupies residues 1-20 (MLQPKRRKYRKEQKGRNTGI).

The protein belongs to the universal ribosomal protein uL16 family. Part of the 50S ribosomal subunit.

Binds 23S rRNA and is also seen to make contacts with the A and possibly P site tRNAs. This Burkholderia mallei (strain NCTC 10247) protein is Large ribosomal subunit protein uL16.